The sequence spans 695 residues: MKNLTTIKQTNKNVKQERRKKYADLAIQGTNNSSIASKRSVELLYLPKLSSANNFQMDKNNKLLEYFKFFVPKKIKRSPCINRGYWLRLFAIRSRLNSIIEQTPQDKKIVVVNLGCGYDPLPFQLLDTNNIQSQQYHDRVSFIDIDYSDLLKIKIELIKTIPELSKIIGLSEDKDYVDDSNVDFLTTPKYLARPCDLNDSKMFSTLLNECQLYDPNVVKVFVAEVSLAYMKPERSDSIIEATSKMENSHFIILEQLIPKGPFEPFSKQMLAHFKRNDSPLQSVLKYNTIESQVQRFNKLGFAYVNVGDMFQLWESADEATKKELLKVEPFDELEEFHLFCHHYVLCHATNYKEFAFTQGFLFDRSISEINLTVDEDYQLLECECPINRKFGDVDVAGNDVFYMGGSNPYRVNEILQLSIHYDKIDMKNIEVSSSEVPVARMCHTFTTISRNNQLLLIGGRKAPHQGLSDNWIFDMKTREWSMIKSLSHTRFRHSACSLPDGNVLILGGVTEGPAMLLYNVTEEIFKDVTPKDEFFQNSLVSAGLEFDPVSKQGIILGGGFMDQTTVSDKAIIFKYDAENATEPITVIKKLQHPLFQRYGSQIKYITPRKLLIVGGTSPSGLFDRTNSIISLDPLSETLTSIPISRRIWEDHSLMLAGFSLVSTSMGTIHIIGGGATCYGFGSVTNVGLKLIAIAK.

S-adenosyl-L-methionine is bound by residues lysine 38, arginine 88, glycine 115, aspartate 146–tyrosine 147, aspartate 196–leucine 197, and glutamate 224. Arginine 88 acts as the Proton donor; for both methylation and methoxycarbonylation activities in catalysis. The Proton acceptor; for methoxycarbonylation activity role is filled by tyrosine 229.

This sequence belongs to the methyltransferase superfamily. LCMT family.

Its subcellular location is the cytoplasm. The protein localises to the mitochondrion. The enzyme catalyses 7-[(3S)-3-amino-3-carboxypropyl]wyosine(37) in tRNA(Phe) + S-adenosyl-L-methionine = 7-[(3S)-(3-amino-3-methoxycarbonyl)propyl]wyosine(37) in tRNA(Phe) + S-adenosyl-L-homocysteine. The catalysed reaction is 7-[(3S)-(3-amino-3-methoxycarbonyl)propyl]wyosine(37) in tRNA(Phe) + S-adenosyl-L-methionine + CO2 = wybutosine(37) in tRNA(Phe) + S-adenosyl-L-homocysteine + 2 H(+). It functions in the pathway tRNA modification; wybutosine-tRNA(Phe) biosynthesis. S-adenosyl-L-methionine-dependent methyltransferase that acts as a component of the wybutosine biosynthesis pathway. Wybutosine is a hyper modified guanosine with a tricyclic base found at the 3'-position adjacent to the anticodon of eukaryotic phenylalanine tRNA. Catalyzes the final 2 independent reactions, methylation of the alpha-carboxy group of wybutosine-72 to form wybutosine-58, and methoxycarbonylation of alpha-amino group of wybutosine-58 through the fixation of CO(2) to complete wybutosine. This Saccharomyces cerevisiae (strain ATCC 204508 / S288c) (Baker's yeast) protein is tRNA wybutosine-synthesizing protein 4 (PPM2).